We begin with the raw amino-acid sequence, 268 residues long: MHDLWPTILLGIIEGLSEFLPISSTGHLLVAEHWLGERSETFNIFIQLGAVLAVCLIYKERLSSFLFLWKDREKLPYFLKLSVAFIITSILGLWVKKMGWELPKDLGPVIIAIFGGAFWIYFTEKVSSQRQSFVEEISWPTAIAVGASQVVAGVLPGFSRSAATILMAVLLGVSRPAATEFAFLLGIPTMFAASLFAWIEETHFLKNPSLDSPLTLATGFCVSAVVAFISVKWLLSYIQTHTFIPFVWYRVGLGFFLIALVALGWKTQ.

6 consecutive transmembrane segments (helical) span residues 39-59 (SETF…LIYK), 75-95 (LPYF…GLWV), 106-126 (LGPV…TEKV), 179-199 (TEFA…FAWI), 214-234 (LTLA…VKWL), and 243-263 (FIPF…LVAL).

It belongs to the UppP family.

The protein localises to the cell inner membrane. The catalysed reaction is di-trans,octa-cis-undecaprenyl diphosphate + H2O = di-trans,octa-cis-undecaprenyl phosphate + phosphate + H(+). Functionally, catalyzes the dephosphorylation of undecaprenyl diphosphate (UPP). Confers resistance to bacitracin. The sequence is that of Undecaprenyl-diphosphatase from Methylacidiphilum infernorum (isolate V4) (Methylokorus infernorum (strain V4)).